The primary structure comprises 347 residues: Histone deacetylase 11 (347 aa).

Residues 14-318 (TRWPIVYSPR…ARIIADSILN (305 aa)) are histone deacetylase. The active site involves His-143.

It belongs to the histone deacetylase family. In terms of assembly, interacts with HDAC6.

The protein localises to the nucleus. It catalyses the reaction N(6)-acetyl-L-lysyl-[histone] + H2O = L-lysyl-[histone] + acetate. In terms of biological role, responsible for the deacetylation of lysine residues on the N-terminal part of the core histones (H2A, H2B, H3 and H4). Histone deacetylation gives a tag for epigenetic repression and plays an important role in transcriptional regulation, cell cycle progression and developmental events. Histone deacetylases act via the formation of large multiprotein complexes. This Macaca fascicularis (Crab-eating macaque) protein is Histone deacetylase 11 (HDAC11).